The chain runs to 223 residues: Uracil-DNA glycosylase (223 aa).

Aspartate 61 acts as the Proton acceptor in catalysis.

It belongs to the uracil-DNA glycosylase (UDG) superfamily. UNG family.

The protein resides in the cytoplasm. It catalyses the reaction Hydrolyzes single-stranded DNA or mismatched double-stranded DNA and polynucleotides, releasing free uracil.. Functionally, excises uracil residues from the DNA which can arise as a result of misincorporation of dUMP residues by DNA polymerase or due to deamination of cytosine. This is Uracil-DNA glycosylase from Histophilus somni (strain 129Pt) (Haemophilus somnus).